Reading from the N-terminus, the 476-residue chain is Serine/threonine-protein kinase PknF (476 aa).

Positions F12–G279 constitute a Protein kinase domain. Residues L18–V26 and K41 contribute to the ATP site. D137 acts as the Proton acceptor in catalysis. Residues T306–V326 traverse the membrane as a helical segment. The disordered stretch occupies residues A332–T376. Positions A338–T376 are enriched in low complexity.

It belongs to the protein kinase superfamily. Ser/Thr protein kinase family. In terms of processing, autophosphorylated. Dephosphorylated by PstP.

Its subcellular location is the cell membrane. It catalyses the reaction L-seryl-[protein] + ATP = O-phospho-L-seryl-[protein] + ADP + H(+). The enzyme catalyses L-threonyl-[protein] + ATP = O-phospho-L-threonyl-[protein] + ADP + H(+). Functionally, a serine/threonine-protein kinase, acts on HupB in vitro. The protein is Serine/threonine-protein kinase PknF of Mycobacterium tuberculosis (strain ATCC 25177 / H37Ra).